An 89-amino-acid polypeptide reads, in one-letter code: Small ribosomal subunit protein uS15 (89 aa).

This sequence belongs to the universal ribosomal protein uS15 family. In terms of assembly, part of the 30S ribosomal subunit. Forms a bridge to the 50S subunit in the 70S ribosome, contacting the 23S rRNA.

In terms of biological role, one of the primary rRNA binding proteins, it binds directly to 16S rRNA where it helps nucleate assembly of the platform of the 30S subunit by binding and bridging several RNA helices of the 16S rRNA. Functionally, forms an intersubunit bridge (bridge B4) with the 23S rRNA of the 50S subunit in the ribosome. This chain is Small ribosomal subunit protein uS15, found in Lysinibacillus sphaericus (strain C3-41).